The primary structure comprises 667 residues: DNA ligase (667 aa).

NAD(+) is bound by residues 34–38 (DYEFD), 83–84 (SL), and Glu-117. Lys-119 serves as the catalytic N6-AMP-lysine intermediate. NAD(+)-binding residues include Arg-140, Glu-176, Lys-289, and Lys-313. The Zn(2+) site is built by Cys-407, Cys-410, Cys-425, and Cys-431. Positions 591–667 (QVNRNFEGMS…ISEDEFMGMM (77 aa)) constitute a BRCT domain.

This sequence belongs to the NAD-dependent DNA ligase family. LigA subfamily. Requires Mg(2+) as cofactor. It depends on Mn(2+) as a cofactor.

It carries out the reaction NAD(+) + (deoxyribonucleotide)n-3'-hydroxyl + 5'-phospho-(deoxyribonucleotide)m = (deoxyribonucleotide)n+m + AMP + beta-nicotinamide D-nucleotide.. DNA ligase that catalyzes the formation of phosphodiester linkages between 5'-phosphoryl and 3'-hydroxyl groups in double-stranded DNA using NAD as a coenzyme and as the energy source for the reaction. It is essential for DNA replication and repair of damaged DNA. The chain is DNA ligase from Chlorobium chlorochromatii (strain CaD3).